A 73-amino-acid polypeptide reads, in one-letter code: Large ribosomal subunit protein bL31 (73 aa).

The Zn(2+) site is built by cysteine 16, cysteine 18, cysteine 38, and cysteine 41.

This sequence belongs to the bacterial ribosomal protein bL31 family. Type A subfamily. As to quaternary structure, part of the 50S ribosomal subunit. The cofactor is Zn(2+).

Binds the 23S rRNA. The protein is Large ribosomal subunit protein bL31 of Vibrio parahaemolyticus serotype O3:K6 (strain RIMD 2210633).